The following is a 239-amino-acid chain: Fatty acid metabolism regulator protein (239 aa).

An HTH gntR-type domain is found at 6–74 (QSPAGFAEEY…HGKPTKVNNF (69 aa)). The segment at residues 34-53 (ERELSELIGVTRTTLREVLQ) is a DNA-binding region (H-T-H motif).

In terms of assembly, homodimer.

It localises to the cytoplasm. Multifunctional regulator of fatty acid metabolism. This chain is Fatty acid metabolism regulator protein, found in Klebsiella pneumoniae (strain 342).